Reading from the N-terminus, the 138-residue chain is uncharacterized protein (138 aa).

This is an uncharacterized protein from Schizosaccharomyces pombe (strain 972 / ATCC 24843) (Fission yeast).